The sequence spans 73 residues: MIKFSRRRLAKLANAQIDDRIDYKNVDLLRQFLTEEGKILPRRVTGLTAKQQRGMTRAIKQARIMALLEFIHR.

This sequence belongs to the bacterial ribosomal protein bS18 family. Part of the 30S ribosomal subunit.

It localises to the plastid. The protein localises to the chloroplast. This Nephroselmis olivacea (Green alga) protein is Small ribosomal subunit protein bS18c.